The chain runs to 459 residues: ATP-dependent 6-phosphofructokinase (459 aa).

ATP is bound by residues glycine 89, 154–155 (RG), and 179–182 (GDGG). Aspartate 180 is a binding site for Mg(2+). Substrate-binding positions include 208–210 (TID), 253–255 (MGR), glutamate 309, and 368–371 (YAIR). Aspartate 210 (proton acceptor) is an active-site residue.

This sequence belongs to the phosphofructokinase type A (PFKA) family. PPi-dependent PFK group II subfamily. Atypical ATP-dependent clade 'X' sub-subfamily. Homodimer. The cofactor is Mg(2+).

Its subcellular location is the cytoplasm. The catalysed reaction is beta-D-fructose 6-phosphate + ATP = beta-D-fructose 1,6-bisphosphate + ADP + H(+). The protein operates within carbohydrate degradation; glycolysis; D-glyceraldehyde 3-phosphate and glycerone phosphate from D-glucose: step 3/4. Its activity is regulated as follows. AMP causes 20-40% inhibition and diphosphate causes 20-50% inhibition. ADP, citrate, PEP and FBP have no effect. Catalyzes the phosphorylation of D-fructose 6-phosphate to fructose 1,6-bisphosphate by ATP, the first committing step of glycolysis. The sequence is that of ATP-dependent 6-phosphofructokinase from Amycolatopsis methanolica.